A 517-amino-acid polypeptide reads, in one-letter code: Optineurin (517 aa).

Coiled coils occupy residues 15 to 127 (NLGS…DLVA) and 174 to 453 (KAES…LGRH). Disordered stretches follow at residues 216–237 (KLEHADSSAQTSLPSAAETNAS) and 454–488 (SMSEMQRRHVPRGANPQGPTAPNNLPGGRGEWQQQ). Residues 222–237 (SSAQTSLPSAAETNAS) are compositionally biased toward polar residues. The segment at 487-517 (QQNIPDHACPKCGEVLPDLDSLQIHIMDCII) adopts a CCHC NOA-type zinc-finger fold. Residues cysteine 495, cysteine 498, histidine 511, and cysteine 515 each contribute to the Zn(2+) site.

It is found in the cytoplasm. Its subcellular location is the perinuclear region. The protein localises to the golgi apparatus. The protein resides in the trans-Golgi network. It localises to the cytoplasmic vesicle. It is found in the recycling endosome. Its subcellular location is the autophagosome. Probably part of the TNF-alpha signaling pathway that can shift the equilibrium toward induction of cell death. May act by regulating membrane trafficking and cellular morphogenesis. The polypeptide is Optineurin (optn) (Danio rerio (Zebrafish)).